A 116-amino-acid polypeptide reads, in one-letter code: Cell cycle protein GpsB (116 aa).

Positions 32-69 form a coiled coil; the sequence is LDDVIKDYETYSALVKELREENSRLKQELSKRMQEAPN. The tract at residues 57–78 is disordered; sequence KQELSKRMQEAPNSTASQVHQS. The span at 67-78 shows a compositional bias: polar residues; that stretch reads APNSTASQVHQS.

Belongs to the GpsB family. In terms of assembly, forms polymers through the coiled coil domains. Interacts with PBP1, MreC and EzrA.

Its subcellular location is the cytoplasm. In terms of biological role, divisome component that associates with the complex late in its assembly, after the Z-ring is formed, and is dependent on DivIC and PBP2B for its recruitment to the divisome. Together with EzrA, is a key component of the system that regulates PBP1 localization during cell cycle progression. Its main role could be the removal of PBP1 from the cell pole after pole maturation is completed. Also contributes to the recruitment of PBP1 to the division complex. Not essential for septum formation. The sequence is that of Cell cycle protein GpsB from Streptococcus gordonii (strain Challis / ATCC 35105 / BCRC 15272 / CH1 / DL1 / V288).